Here is a 75-residue protein sequence, read N- to C-terminus: MSSKAITLLLIALLFSLSLAQAARPLQPADSTKSVHVIPEKVHDEACEGVGEEECLMRRTLTAHVDYIYTQDHNP.

The signal sequence occupies residues 1-22 (MSSKAITLLLIALLFSLSLAQA). Residues 23–66 (ARPLQPADSTKSVHVIPEKVHDEACEGVGEEECLMRRTLTAHVD) constitute a propeptide that is removed on maturation. 2 positions are modified to sulfotyrosine: Tyr-67 and Tyr-69. The propeptide occupies 72–75 (DHNP).

This sequence belongs to the phytosulfokine family. Post-translationally, sulfation is important for activity and for the binding to a putative membrane receptor. Deletion of the sulfate groups of Tyr-67 and Tyr-69 resulted in compounds with respectively 0.6% and 4% of the activity. PSK-alpha is produced by endopeptidase digestion. PSK-beta is produced from PSK-alpha by exopeptidase digestion.

It localises to the secreted. Functionally, promotes plant cell differentiation, organogenesis and somatic embryogenesis as well as cell proliferation. This chain is Phytosulfokines (PSK), found in Asparagus officinalis (Garden asparagus).